A 398-amino-acid chain; its full sequence is Cell division protein FtsZ (398 aa).

GTP-binding positions include 21–25 (GGGGN), 108–110 (GTG), E139, R143, and D187.

This sequence belongs to the FtsZ family. Homodimer. Polymerizes to form a dynamic ring structure in a strictly GTP-dependent manner. Interacts directly with several other division proteins.

The protein localises to the cytoplasm. In terms of biological role, essential cell division protein that forms a contractile ring structure (Z ring) at the future cell division site. The regulation of the ring assembly controls the timing and the location of cell division. One of the functions of the FtsZ ring is to recruit other cell division proteins to the septum to produce a new cell wall between the dividing cells. Binds GTP and shows GTPase activity. In Pseudomonas putida (strain ATCC 47054 / DSM 6125 / CFBP 8728 / NCIMB 11950 / KT2440), this protein is Cell division protein FtsZ.